The following is a 261-amino-acid chain: (S)-ureidoglycine aminohydrolase (261 aa).

The 47-residue stretch at 184–230 folds into the Cupin type-2 domain; it reads LSFAPGASHGYIETHVQEHGAYILSGQGVYNLDNNWIPVKKGDYIFM. Residues Glu196, His198, His202, and Gln236 each contribute to the Mn(2+) site. A substrate-binding site is contributed by Glu196. Gln236, Tyr249, and Lys253 together coordinate substrate.

It belongs to the UGHY family. As to quaternary structure, monomer. The cofactor is Mn(2+).

The protein resides in the cytoplasm. The catalysed reaction is (S)-2-ureidoglycine + H2O = (S)-ureidoglycolate + NH4(+). Involved in the anaerobic nitrogen utilization via the assimilation of allantoin. Catalyzes the second stereospecific hydrolysis reaction (deamination) of the allantoin degradation pathway, producing S-ureidoglycolate and ammonia from S-ureidoglycine. This is (S)-ureidoglycine aminohydrolase (allE) from Escherichia coli (strain K12).